We begin with the raw amino-acid sequence, 686 residues long: Chondroitin proteoglycan 1 (686 aa).

The signal sequence occupies residues 1 to 18; it reads MLPKSVLIVAFLVASSSA. The N-linked (GlcNAc...) asparagine glycan is linked to asparagine 46. Residues 63–120 form the Chitin-binding type-2 1 domain; that stretch reads DTDCSTKEDGLYAIGGCSPQFLTCSGGIARIMDCPANLIYDQRIIACEYSYNVPECSG. Residues cysteine 96 and cysteine 109 are joined by a disulfide bond. An N-linked (GlcNAc...) asparagine glycan is attached at asparagine 143. The Chitin-binding type-2 2 domain occupies 228-285; sequence DKTCNGKADGFYSFGQCSDHYIACSNGYTIPMQCPARLSFDEARVICDYTMNVPECQN. An intrachain disulfide couples cysteine 261 to cysteine 274. Residues 284-312 form a disordered region; that stretch reads QNGSGNYEGSAEETTTEASGELPYSNGYG. Residues asparagine 285, asparagine 635, and asparagine 664 are each glycosylated (N-linked (GlcNAc...) asparagine). Positions 658–686 are disordered; it reads KLRSATNRTSTKEATTRTQNMHAHYHRNH.

Its function is as follows. Required for polar body extrusion during cytokinesis in embryo development. Affects cortical granule size. Shown to have roles in meiotic chromosome segregation, osmotic barrier function and polarization in conjunction with cpg-2. Binds chitin. This chain is Chondroitin proteoglycan 1 (cpg-1), found in Caenorhabditis briggsae.